A 116-amino-acid chain; its full sequence is Iron-sulfur cluster insertion protein ErpA (116 aa).

Residues cysteine 44, cysteine 108, and cysteine 110 each coordinate iron-sulfur cluster.

Belongs to the HesB/IscA family. In terms of assembly, homodimer. Iron-sulfur cluster is required as a cofactor.

Functionally, required for insertion of 4Fe-4S clusters for at least IspG. The protein is Iron-sulfur cluster insertion protein ErpA of Shewanella amazonensis (strain ATCC BAA-1098 / SB2B).